A 150-amino-acid polypeptide reads, in one-letter code: Arginine repressor (150 aa).

It belongs to the ArgR family.

The protein localises to the cytoplasm. The protein operates within amino-acid biosynthesis; L-arginine biosynthesis [regulation]. In terms of biological role, regulates arginine biosynthesis genes. This chain is Arginine repressor, found in Clostridium botulinum (strain 657 / Type Ba4).